Consider the following 91-residue polypeptide: Small ribosomal subunit protein uS19 (91 aa).

It belongs to the universal ribosomal protein uS19 family.

Protein S19 forms a complex with S13 that binds strongly to the 16S ribosomal RNA. The chain is Small ribosomal subunit protein uS19 from Azotobacter vinelandii (strain DJ / ATCC BAA-1303).